The sequence spans 205 residues: Large ribosomal subunit protein uL4 (205 aa).

Positions 44-79 (RAGTKAQKTRREVSGGGAKPWRQKGTGRARAGSSRS) are disordered.

The protein belongs to the universal ribosomal protein uL4 family. Part of the 50S ribosomal subunit.

Its function is as follows. One of the primary rRNA binding proteins, this protein initially binds near the 5'-end of the 23S rRNA. It is important during the early stages of 50S assembly. It makes multiple contacts with different domains of the 23S rRNA in the assembled 50S subunit and ribosome. In terms of biological role, forms part of the polypeptide exit tunnel. The polypeptide is Large ribosomal subunit protein uL4 (Coxiella burnetii (strain RSA 331 / Henzerling II)).